We begin with the raw amino-acid sequence, 84 residues long: Short neurotoxin SNTX-1 (84 aa).

The first 21 residues, 1-21 (MKTLLLILVVVTIVCLDLVCC), serve as a signal peptide directing secretion. Disulfide bonds link Cys-25-Cys-46, Cys-39-Cys-63, Cys-65-Cys-76, and Cys-77-Cys-82.

Belongs to the three-finger toxin family. Short-chain subfamily. Type I alpha-neurotoxin sub-subfamily. As to expression, expressed by the venom gland.

The protein resides in the secreted. Its function is as follows. Binds to muscle nicotinic acetylcholine receptor (nAChR) and inhibit acetylcholine from binding to the receptor, thereby impairing neuromuscular transmission. This is Short neurotoxin SNTX-1 from Demansia vestigiata (Lesser black whip snake).